Here is a 253-residue protein sequence, read N- to C-terminus: Imidazole glycerol phosphate synthase subunit HisF (253 aa).

Residues D11 and D130 contribute to the active site.

This sequence belongs to the HisA/HisF family. As to quaternary structure, heterodimer of HisH and HisF.

The protein resides in the cytoplasm. The enzyme catalyses 5-[(5-phospho-1-deoxy-D-ribulos-1-ylimino)methylamino]-1-(5-phospho-beta-D-ribosyl)imidazole-4-carboxamide + L-glutamine = D-erythro-1-(imidazol-4-yl)glycerol 3-phosphate + 5-amino-1-(5-phospho-beta-D-ribosyl)imidazole-4-carboxamide + L-glutamate + H(+). It functions in the pathway amino-acid biosynthesis; L-histidine biosynthesis; L-histidine from 5-phospho-alpha-D-ribose 1-diphosphate: step 5/9. IGPS catalyzes the conversion of PRFAR and glutamine to IGP, AICAR and glutamate. The HisF subunit catalyzes the cyclization activity that produces IGP and AICAR from PRFAR using the ammonia provided by the HisH subunit. In Dinoroseobacter shibae (strain DSM 16493 / NCIMB 14021 / DFL 12), this protein is Imidazole glycerol phosphate synthase subunit HisF.